A 475-amino-acid chain; its full sequence is MTGKTLYDKLWEMHEVKRRDDGSSLIYIDRHILHEVTSPQAFEGLRLAGRKPWRIDANIATPDHNVPTTKAERQGGLEAIADEVSRIQVQTLDENCDDFGILEFKMNDVRQGIVHVVGPEQGATLPGMTVVCGDSHTSTHGAFGALAHGIGTSEVEHVLATQCLVAKKMKNMQVRVEGKLPFGVTAKDIVLAVIGKIGTAGGNGHALEFAGSAIRDLSLEGRMTICNMSIEAGARVGLVAVDEKTIAYVKDRPFAPKGSDWDKAVTQWQNLVSDADAVFDTVVELKAEDIKPQVSWGTSPEMVLAVDQNVPDPAVETDPVKKDSITRALKYMGLSANQPITDIQLDRVFIGSCTNSRIEDLRAAAEVAKGRKVASTVKQALVVPGSGLVKAQAEAEGLDKIFIEAGFEWREPGCSMCLAMNPDKLGSGEHCASTSNRNFEGRQGAGGRTHLVSPAMAAAAAVTGRFIDVRELIQA.

Cys353, Cys414, and Cys417 together coordinate [4Fe-4S] cluster.

Belongs to the aconitase/IPM isomerase family. LeuC type 1 subfamily. As to quaternary structure, heterodimer of LeuC and LeuD. [4Fe-4S] cluster serves as cofactor.

It carries out the reaction (2R,3S)-3-isopropylmalate = (2S)-2-isopropylmalate. It functions in the pathway amino-acid biosynthesis; L-leucine biosynthesis; L-leucine from 3-methyl-2-oxobutanoate: step 2/4. In terms of biological role, catalyzes the isomerization between 2-isopropylmalate and 3-isopropylmalate, via the formation of 2-isopropylmaleate. This Ectopseudomonas mendocina (strain ymp) (Pseudomonas mendocina) protein is 3-isopropylmalate dehydratase large subunit.